Reading from the N-terminus, the 438-residue chain is Vasoactive intestinal polypeptide receptor 2 (438 aa).

An N-terminal signal peptide occupies residues 1–23 (MRTLLPPALLTCWLLAPVNSIHP). The Extracellular portion of the chain corresponds to 24 to 124 (ECRFHLEIQE…EDESKITFYI (101 aa)). 3 disulfide bridges follow: C38/C61, C52/C93, and C75/C109. N58, N88, and N92 each carry an N-linked (GlcNAc...) asparagine glycan. Residues 125–150 (LVKAIYTLGYSVSLMSLATGSIILCL) form a helical membrane-spanning segment. At 151–158 (FRKLHCTR) the chain is on the cytoplasmic side. Residues 159 to 180 (NYIHLNLFLSFILRAISVLVKD) traverse the membrane as a helical segment. The Extracellular portion of the chain corresponds to 181–203 (DVLYSSSGTLHCPDQPSSWVGCK). An intrachain disulfide couples C202 to C271. Residues 204-228 (LSLVFLQYCIMANFFWLLVEGLYLH) traverse the membrane as a helical segment. At 229–239 (TLLVAMLPPRR) the chain is on the cytoplasmic side. A helical membrane pass occupies residues 240-261 (CFLAYLLIGWGLPTVCIGAWTA). Topologically, residues 262–280 (ARLYLEDTGCWDTNDHSVP) are extracellular. A helical membrane pass occupies residues 281 to 304 (WWVIRIPILISIIVNFVLFISIIR). Residues 305–325 (ILLQKLTSPDVGGNDQSQYKR) are Cytoplasmic-facing. Residues 326–346 (LAKSTLLLIPLFGVHYMVFAV) traverse the membrane as a helical segment. Topologically, residues 347–354 (FPISISSK) are extracellular. Residues 355–378 (YQILFELCLGSFQGLVVAVLYCFL) traverse the membrane as a helical segment. Residues 379 to 438 (NSEVQCELKRKWRSRCPTPSASRDYRVCGSSFSRNGSEGALQFHRGSRAQSFLQTETSVI) lie on the Cytoplasmic side of the membrane.

It belongs to the G-protein coupled receptor 2 family. As to quaternary structure, interacts with ADCYAP1/PACAP (via N-terminal extracellular domain); activated by PACAP27 and CAPAC38 neuropeptides. Interacts with VIP; the interaction results in VIPR1 activation. Expressed in CD4+ T-cells, but not in CD8+ T-cells. Expressed in the T-cell lines Jurkat, Peer, MOLT-4, HSB, YT and SUP-T1, but not in the T-cell lines HARRIS and HuT 78.

The protein localises to the cell membrane. Its function is as follows. G protein-coupled receptor activated by the neuropeptides vasoactive intestinal peptide (VIP) and pituitary adenylate cyclase-activating polypeptide (ADCYAP1/PACAP). Binds VIP and both PACAP27 and PACAP38 bioactive peptides with the following order of potency PACAP38 = VIP &gt; PACAP27. Ligand binding causes a conformation change that triggers signaling via guanine nucleotide-binding proteins (G proteins) and modulates the activity of downstream effectors. Activates cAMP-dependent pathway. May be coupled to phospholipase C. This is Vasoactive intestinal polypeptide receptor 2 from Homo sapiens (Human).